Here is a 194-residue protein sequence, read N- to C-terminus: dCTP deaminase (194 aa).

Residues R110–R115, D128, V136–E138, Y171, K178, and Q182 contribute to the dCTP site. E138 functions as the Proton donor/acceptor in the catalytic mechanism.

Belongs to the dCTP deaminase family. Homotrimer.

It carries out the reaction dCTP + H2O + H(+) = dUTP + NH4(+). It participates in pyrimidine metabolism; dUMP biosynthesis; dUMP from dCTP (dUTP route): step 1/2. Its function is as follows. Catalyzes the deamination of dCTP to dUTP. This Glaesserella parasuis serovar 5 (strain SH0165) (Haemophilus parasuis) protein is dCTP deaminase.